A 275-amino-acid polypeptide reads, in one-letter code: 2,3,4,5-tetrahydropyridine-2,6-dicarboxylate N-succinyltransferase (275 aa).

Substrate is bound by residues arginine 106 and aspartate 143.

Belongs to the transferase hexapeptide repeat family. In terms of assembly, homotrimer.

The protein localises to the cytoplasm. It carries out the reaction (S)-2,3,4,5-tetrahydrodipicolinate + succinyl-CoA + H2O = (S)-2-succinylamino-6-oxoheptanedioate + CoA. The protein operates within amino-acid biosynthesis; L-lysine biosynthesis via DAP pathway; LL-2,6-diaminopimelate from (S)-tetrahydrodipicolinate (succinylase route): step 1/3. The polypeptide is 2,3,4,5-tetrahydropyridine-2,6-dicarboxylate N-succinyltransferase (Ralstonia nicotianae (strain ATCC BAA-1114 / GMI1000) (Ralstonia solanacearum)).